Consider the following 105-residue polypeptide: UPF0145 protein lpp0255 (105 aa).

This sequence belongs to the UPF0145 family.

The chain is UPF0145 protein lpp0255 from Legionella pneumophila (strain Paris).